Consider the following 511-residue polypeptide: 2-isopropylmalate synthase (511 aa).

Residues 4–266 form the Pyruvate carboxyltransferase domain; the sequence is IRIFDTTLRD…ETGIDLSQLY (263 aa). Mn(2+) is bound by residues Asp-13, His-201, His-203, and Asn-237. The tract at residues 391-511 is regulatory domain; sequence VLEKIRVVSG…IAANARAQKN (121 aa).

It belongs to the alpha-IPM synthase/homocitrate synthase family. LeuA type 1 subfamily. Homodimer. Requires Mn(2+) as cofactor.

Its subcellular location is the cytoplasm. The enzyme catalyses 3-methyl-2-oxobutanoate + acetyl-CoA + H2O = (2S)-2-isopropylmalate + CoA + H(+). It participates in amino-acid biosynthesis; L-leucine biosynthesis; L-leucine from 3-methyl-2-oxobutanoate: step 1/4. Functionally, catalyzes the condensation of the acetyl group of acetyl-CoA with 3-methyl-2-oxobutanoate (2-ketoisovalerate) to form 3-carboxy-3-hydroxy-4-methylpentanoate (2-isopropylmalate). This Acetivibrio thermocellus (strain ATCC 27405 / DSM 1237 / JCM 9322 / NBRC 103400 / NCIMB 10682 / NRRL B-4536 / VPI 7372) (Clostridium thermocellum) protein is 2-isopropylmalate synthase.